The chain runs to 49 residues: Fungus-induced-related protein 16 (49 aa).

This Caenorhabditis elegans protein is Fungus-induced-related protein 16 (fipr-16).